Consider the following 236-residue polypeptide: Orotidine 5'-phosphate decarboxylase (236 aa).

Substrate is bound by residues D17, K39, D66–T75, T125, R186, Q195, G215, and R216. K68 functions as the Proton donor in the catalytic mechanism.

Belongs to the OMP decarboxylase family. Type 1 subfamily. Homodimer.

The catalysed reaction is orotidine 5'-phosphate + H(+) = UMP + CO2. The protein operates within pyrimidine metabolism; UMP biosynthesis via de novo pathway; UMP from orotate: step 2/2. Catalyzes the decarboxylation of orotidine 5'-monophosphate (OMP) to uridine 5'-monophosphate (UMP). The chain is Orotidine 5'-phosphate decarboxylase from Buchnera aphidicola subsp. Schizaphis graminum (strain Sg).